The following is a 238-amino-acid chain: Sugar fermentation stimulation protein homolog (238 aa).

It belongs to the SfsA family.

In Brucella melitensis biotype 1 (strain ATCC 23456 / CCUG 17765 / NCTC 10094 / 16M), this protein is Sugar fermentation stimulation protein homolog.